The following is a 496-amino-acid chain: Lysine--tRNA ligase (496 aa).

Positions 409 and 416 each coordinate Mg(2+).

The protein belongs to the class-II aminoacyl-tRNA synthetase family. Homodimer. It depends on Mg(2+) as a cofactor.

The protein resides in the cytoplasm. It catalyses the reaction tRNA(Lys) + L-lysine + ATP = L-lysyl-tRNA(Lys) + AMP + diphosphate. The protein is Lysine--tRNA ligase of Streptococcus suis (strain 05ZYH33).